Here is a 141-residue protein sequence, read N- to C-terminus: Galactose-6-phosphate isomerase subunit LacA 1 (141 aa).

It belongs to the LacAB/RpiB family. As to quaternary structure, heteromultimeric protein consisting of LacA and LacB.

It catalyses the reaction aldehydo-D-galactose 6-phosphate = keto-D-tagatose 6-phosphate. It functions in the pathway carbohydrate metabolism; D-galactose 6-phosphate degradation; D-tagatose 6-phosphate from D-galactose 6-phosphate: step 1/1. This chain is Galactose-6-phosphate isomerase subunit LacA 1, found in Streptococcus pyogenes serotype M18 (strain MGAS8232).